The chain runs to 307 residues: 3-methyl-2-oxobutanoate hydroxymethyltransferase (307 aa).

2 residues coordinate Mg(2+): D61 and D100. 3-methyl-2-oxobutanoate-binding positions include 61-62, D100, and K130; that span reads DS. E132 contacts Mg(2+). Residue E199 is the Proton acceptor of the active site.

The protein belongs to the PanB family. Homodecamer; pentamer of dimers. It depends on Mg(2+) as a cofactor.

It is found in the cytoplasm. The catalysed reaction is 3-methyl-2-oxobutanoate + (6R)-5,10-methylene-5,6,7,8-tetrahydrofolate + H2O = 2-dehydropantoate + (6S)-5,6,7,8-tetrahydrofolate. The protein operates within cofactor biosynthesis; (R)-pantothenate biosynthesis; (R)-pantoate from 3-methyl-2-oxobutanoate: step 1/2. Functionally, catalyzes the reversible reaction in which hydroxymethyl group from 5,10-methylenetetrahydrofolate is transferred onto alpha-ketoisovalerate to form ketopantoate. The chain is 3-methyl-2-oxobutanoate hydroxymethyltransferase from Nitratidesulfovibrio vulgaris (strain ATCC 29579 / DSM 644 / CCUG 34227 / NCIMB 8303 / VKM B-1760 / Hildenborough) (Desulfovibrio vulgaris).